The primary structure comprises 707 residues: NAD(P)H-quinone oxidoreductase subunit 5, chloroplastic (707 aa).

Helical transmembrane passes span 9-29 (WIIP…LLLF), 40-60 (WAFP…DLSI), 89-109 (IDSL…FVLI), 125-145 (FAYM…SNLI), 147-167 (IYIF…FWFT), 184-204 (IGDF…GSFE), 219-239 (NEVH…GAVA), 258-278 (TPIS…FLVA), 280-300 (LLPL…IGII), 327-347 (LGYM…FHLI), 354-374 (ALLF…VGYS), 396-416 (IAFL…CFWS), 425-445 (WLYS…TAFY), 538-558 (LFPM…AIPL), and 592-612 (FLTN…TAFL).

The protein belongs to the complex I subunit 5 family. As to quaternary structure, NDH is composed of at least 16 different subunits, 5 of which are encoded in the nucleus.

The protein localises to the plastid. Its subcellular location is the chloroplast thylakoid membrane. The enzyme catalyses a plastoquinone + NADH + (n+1) H(+)(in) = a plastoquinol + NAD(+) + n H(+)(out). It catalyses the reaction a plastoquinone + NADPH + (n+1) H(+)(in) = a plastoquinol + NADP(+) + n H(+)(out). NDH shuttles electrons from NAD(P)H:plastoquinone, via FMN and iron-sulfur (Fe-S) centers, to quinones in the photosynthetic chain and possibly in a chloroplast respiratory chain. The immediate electron acceptor for the enzyme in this species is believed to be plastoquinone. Couples the redox reaction to proton translocation, and thus conserves the redox energy in a proton gradient. The chain is NAD(P)H-quinone oxidoreductase subunit 5, chloroplastic (ndhF) from Malvaviscus arboreus (Turk's cap).